We begin with the raw amino-acid sequence, 407 residues long: Imidazolonepropionase (407 aa).

Residues H74 and H76 each contribute to the Fe(3+) site. Residues H74 and H76 each contribute to the Zn(2+) site. Positions 83, 146, and 179 each coordinate 4-imidazolone-5-propanoate. Y146 is an N-formimidoyl-L-glutamate binding site. H244 lines the Fe(3+) pocket. H244 contacts Zn(2+). Q247 serves as a coordination point for 4-imidazolone-5-propanoate. D319 contacts Fe(3+). D319 contributes to the Zn(2+) binding site. The N-formimidoyl-L-glutamate site is built by N321 and G323. A 4-imidazolone-5-propanoate-binding site is contributed by T324.

It belongs to the metallo-dependent hydrolases superfamily. HutI family. It depends on Zn(2+) as a cofactor. Fe(3+) serves as cofactor.

Its subcellular location is the cytoplasm. It carries out the reaction 4-imidazolone-5-propanoate + H2O = N-formimidoyl-L-glutamate. It participates in amino-acid degradation; L-histidine degradation into L-glutamate; N-formimidoyl-L-glutamate from L-histidine: step 3/3. Its function is as follows. Catalyzes the hydrolytic cleavage of the carbon-nitrogen bond in imidazolone-5-propanoate to yield N-formimidoyl-L-glutamate. It is the third step in the universal histidine degradation pathway. The protein is Imidazolonepropionase of Salmonella paratyphi C (strain RKS4594).